We begin with the raw amino-acid sequence, 306 residues long: Ornithine carbamoyltransferase (306 aa).

Carbamoyl phosphate contacts are provided by residues 46–49 (STRT), glutamine 73, arginine 97, and 124–127 (HPTQ). L-ornithine-binding positions include asparagine 156, aspartate 220, and 224 to 225 (SM). Carbamoyl phosphate-binding positions include 260–261 (CL) and arginine 288.

Belongs to the aspartate/ornithine carbamoyltransferase superfamily. OTCase family.

It is found in the cytoplasm. It catalyses the reaction carbamoyl phosphate + L-ornithine = L-citrulline + phosphate + H(+). It functions in the pathway amino-acid degradation; L-arginine degradation via ADI pathway; carbamoyl phosphate from L-arginine: step 2/2. In terms of biological role, reversibly catalyzes the transfer of the carbamoyl group from carbamoyl phosphate (CP) to the N(epsilon) atom of ornithine (ORN) to produce L-citrulline. In Campylobacter jejuni subsp. jejuni serotype O:6 (strain 81116 / NCTC 11828), this protein is Ornithine carbamoyltransferase.